A 240-amino-acid polypeptide reads, in one-letter code: Probable transcriptional regulatory protein Csal_0810 (240 aa).

The protein belongs to the TACO1 family.

Its subcellular location is the cytoplasm. In Chromohalobacter salexigens (strain ATCC BAA-138 / DSM 3043 / CIP 106854 / NCIMB 13768 / 1H11), this protein is Probable transcriptional regulatory protein Csal_0810.